Here is a 442-residue protein sequence, read N- to C-terminus: Elongation factor 1-alpha 1 (442 aa).

Residues 5 to 227 (KEHLNLVVIG…AALDSFKIPK (223 aa)) form the tr-type G domain. A G1 region spans residues 14–21 (GHVDSGKS). 14-21 (GHVDSGKS) lines the GTP pocket. Residues 70 to 74 (GITID) are G2. The interval 91–94 (DAPG) is G3. Residues 91-95 (DAPGH) and 153-156 (NKMD) each bind GTP. The G4 stretch occupies residues 153-156 (NKMD). The segment at 194-196 (SGF) is G5.

It belongs to the TRAFAC class translation factor GTPase superfamily. Classic translation factor GTPase family. EF-Tu/EF-1A subfamily.

It is found in the cytoplasm. In terms of biological role, this protein promotes the GTP-dependent binding of aminoacyl-tRNA to the A-site of ribosomes during protein biosynthesis. The chain is Elongation factor 1-alpha 1 (EFA1) from Euplotes crassus.